The sequence spans 748 residues: EF-hand domain-containing family member C2 (748 aa).

DM10 domains are found at residues 75-182, 226-366, and 428-535; these read DKQV…VKMG, DRQV…RSKY, and VSNV…EQHA. EF-hand domains are found at residues 556–591 and 631–666; these read EQQK…LDVE and EKFS…FRLP.

The protein localises to the cytoplasm. It localises to the cytoskeleton. The protein resides in the cilium axoneme. In terms of biological role, microtubule inner protein (MIP) part of the dynein-decorated doublet microtubules (DMTs) in cilia axoneme, which is required for motile cilia beating. This chain is EF-hand domain-containing family member C2 (efhc2), found in Danio rerio (Zebrafish).